A 407-amino-acid polypeptide reads, in one-letter code: Sensor histidine kinase YdfH (407 aa).

Residues 1 to 25 (MLIRNPFKDKYYSHDRRALNMLALR) lie on the Cytoplasmic side of the membrane. 2 helical membrane-spanning segments follow: residues 26-46 (VPGL…QFVS) and 47-67 (GGWS…FALL). The Cytoplasmic segment spans residues 68–78 (HWHSYRWVKKR). The next 2 helical transmembrane spans lie at 79–99 (VILY…LMTG) and 100–120 (FFIL…IGMA). Over 121–125 (DRRRT) the chain is Cytoplasmic. The chain crosses the membrane as a helical span at residues 126 to 146 (FLILYLLLLLVINSAYHLHKG). Over 147 to 150 (EVLH) the chain is Extracellular. Residues 151–171 (FIVIAAPIMIVIITYAATFFA) form a helical membrane-spanning segment. The Cytoplasmic segment spans residues 172–407 (QVDEKIKAQL…VPIQGEMQDE (236 aa)). The 202-residue stretch at 201 to 402 (ERQRMARDLH…QIEITVPIQG (202 aa)) folds into the Histidine kinase domain. At H210 the chain carries Phosphohistidine; by autocatalysis.

Its subcellular location is the cell membrane. It carries out the reaction ATP + protein L-histidine = ADP + protein N-phospho-L-histidine.. In terms of biological role, member of the two-component regulatory system YdfH/YdfI. May activate YdfI by phosphorylation. The polypeptide is Sensor histidine kinase YdfH (ydfH) (Bacillus subtilis (strain 168)).